The primary structure comprises 432 residues: Adenylosuccinate synthetase (432 aa).

GTP-binding positions include 13–19 and 41–43; these read GDEGKGK and GHT. The active-site Proton acceptor is Asp14. Mg(2+) contacts are provided by Asp14 and Gly41. IMP-binding positions include 14 to 17, 39 to 42, Thr131, Arg145, Gln226, Thr241, and Arg305; these read DEGK and NAGH. Residue His42 is the Proton donor of the active site. Position 301–307 (301–307) interacts with substrate; that stretch reads SVTGRAR. GTP contacts are provided by residues Arg307, 333–335, and 416–418; these read KLD and STG.

Belongs to the adenylosuccinate synthetase family. In terms of assembly, homodimer. It depends on Mg(2+) as a cofactor.

It localises to the cytoplasm. The catalysed reaction is IMP + L-aspartate + GTP = N(6)-(1,2-dicarboxyethyl)-AMP + GDP + phosphate + 2 H(+). It functions in the pathway purine metabolism; AMP biosynthesis via de novo pathway; AMP from IMP: step 1/2. Functionally, plays an important role in the de novo pathway of purine nucleotide biosynthesis. Catalyzes the first committed step in the biosynthesis of AMP from IMP. This Neisseria gonorrhoeae (strain ATCC 700825 / FA 1090) protein is Adenylosuccinate synthetase.